Consider the following 378-residue polypeptide: Probable endopolygalacturonase AFUB_016610 (378 aa).

The first 19 residues, 1-19 (MLKLMGSLVLLASAAEVIA), serve as a signal peptide directing secretion. Residues 20 to 35 (SPAAEPVAPSTTLEKR) constitute a propeptide that is removed on maturation. Cys-38 and Cys-56 form a disulfide bridge. PbH1 repeat units lie at residues 147 to 169 (TSSS…SING), 170 to 200 (CDGL…DIGS), and 201 to 222 (SSNI…AVNS). The Proton donor role is filled by Asp-215. A disulfide bond links Cys-217 and Cys-233. Residue His-237 is part of the active site. PbH1 repeat units follow at residues 252–273 (VENV…RIKA) and 281–303 (IKGV…LIEQ). The N-linked (GlcNAc...) asparagine glycan is linked to Asn-254. A glycan (N-linked (GlcNAc...) asparagine) is linked at Asn-327. A disulfide bond links Cys-345 and Cys-350. A glycan (N-linked (GlcNAc...) asparagine) is linked at Asn-352. A disulfide bridge links Cys-369 with Cys-378.

It belongs to the glycosyl hydrolase 28 family.

Its subcellular location is the secreted. It catalyses the reaction (1,4-alpha-D-galacturonosyl)n+m + H2O = (1,4-alpha-D-galacturonosyl)n + (1,4-alpha-D-galacturonosyl)m.. Functionally, involved in maceration and soft-rotting of plant tissue. Hydrolyzes the 1,4-alpha glycosidic bonds of de-esterified pectate in the smooth region of the plant cell wall. This chain is Probable endopolygalacturonase AFUB_016610, found in Aspergillus fumigatus (strain CBS 144.89 / FGSC A1163 / CEA10) (Neosartorya fumigata).